The primary structure comprises 471 residues: Nitrosourea synthase (471 aa).

The tract at residues Met-177–Lys-328 is HO-like. Residues Glu-189, Glu-215, His-225, Glu-281, His-311, Asp-315, His-318, His-407, His-409, and His-448 each contribute to the Fe(2+) site. The segment at Val-397–Tyr-459 is cupin.

Homodimer. It depends on Fe(2+) as a cofactor.

It catalyses the reaction N(omega)-methyl-L-arginine + 2 NADH + 3 O2 + H(+) = N(delta)-hydroxy-N(omega)-methyl-N(omega)-nitroso-L-citrulline + 2 NAD(+) + 3 H2O. The enzyme catalyses N(omega)-methyl-L-arginine + NADH + O2 + H(+) = N(delta)-hydroxy-N(omega)-methyl-L-arginine + NAD(+) + H2O. The catalysed reaction is N(delta)-hydroxy-N(omega)-methyl-L-arginine + NADH + O2 = N(delta),N(omega')-dihydroxy-N(omega)-methyl-L-arginine + NAD(+) + H2O. It carries out the reaction N(delta),N(omega')-dihydroxy-N(omega)-methyl-L-arginine + O2 = N(delta)-hydroxy-N(omega)-methyl-N(omega)-nitroso-L-citrulline + H2O. It catalyses the reaction 2 N(delta)-hydroxy-N(omega)-methyl-N(omega)-nitroso-L-citrulline + AH2 = 2 N(delta)-hydroxy-N(omega)-methyl-L-citrulline + 2 nitric oxide + A. The protein operates within antibiotic biosynthesis. Its function is as follows. Involved in the biosynthesis of the glucosamine-nitrosourea antibiotic streptozotocin (SZN). Catalyzes a complex multi-step reaction: the overall reaction is an oxidative rearrangement of the guanidine group of N(omega)-methyl-L-arginine (L-NMA), generating an N-nitrosourea product. SznF first hydroxylates L-NMA to form N(delta)-hydroxy-N(omega)-methyl-L-arginine (L-HMA), which is further hydroxylated to give N(delta)-hydroxy-N(omega)-hydroxy-N(omega)-methyl-L-arginine (L-DHMA). Subsequently, an oxidative rearrangement converts this intermediate to N(delta)-hydroxy-N(omega)-methyl-N(omega)-nitroso-L-citrulline. This product is unstable, and degrades non-enzymically into nitric oxide and the denitrosated product N(delta)-hydroxy-N(omega)-methyl-L-citrulline. The protein is Nitrosourea synthase of Streptomyces achromogenes subsp. streptozoticus.